We begin with the raw amino-acid sequence, 111 residues long: Viscotoxin-A3 (111 aa).

Residues methionine 1–serine 26 form the signal peptide. Disulfide bonds link cysteine 29/cysteine 66, cysteine 30/cysteine 58, and cysteine 42/cysteine 52. Positions phenylalanine 73–alanine 111 are cleaved as a propeptide — acidic domain.

It belongs to the plant thionin (TC 1.C.44) family.

The protein localises to the secreted. In terms of biological role, thionins are small plant proteins which are toxic to animal cells. They seem to exert their toxic effect at the level of the cell membrane. Their precise function is not known. This chain is Viscotoxin-A3 (THI2.1), found in Viscum album (European mistletoe).